The chain runs to 430 residues: MGALRPQPPRMPAGHVAPAYWQKRGLAAWALWPLAQLYRALVAARRGLYRAGWLKAQHPGRPVIVVGNVIAGGAGKTPVVIALARHLQARGLRVGVIARGHGRSRRDCRAVLPDSPASAVGDEPALIARHFANGPAVPVFVARRRISAARALLAAHPDTDVLLCDDGLQHLALRRDLEICVFNDQGLGNGFLQPAGPLREPWPRSVDFVLHAGAAPGGSPAPAFGVQRSLAPCALRSDGAAVPLARLQGQPLHALAAVARPGEFFAMLQARGLTLAHTEALPDHYDLQRWERMTDPRLTLICTEKDAVKLWPLHPDALAVPLVLHIDPGFFAALDAWLPARRAMPEIAPGSDAAAIIAGTEPTLPENHRPMDPKLLQLLVCPVTKGPLRYDRAAQELISRSARLAYPVRDGIPVLLENEARPLTDEELEQ.

Residues 1-370 (MGALRPQPPR…EPTLPENHRP (370 aa)) form a tetraacyldisaccharide 4'-kinase region. Position 70–77 (70–77 (IAGGAGKT)) interacts with ATP. Residues 371–396 (MDPKLLQLLVCPVTKGPLRYDRAAQE) are UPF0434.

This sequence in the N-terminal section; belongs to the LpxK family. The protein in the C-terminal section; belongs to the UPF0434 family.

The catalysed reaction is a lipid A disaccharide + ATP = a lipid IVA + ADP + H(+). It participates in glycolipid biosynthesis; lipid IV(A) biosynthesis; lipid IV(A) from (3R)-3-hydroxytetradecanoyl-[acyl-carrier-protein] and UDP-N-acetyl-alpha-D-glucosamine: step 6/6. Functionally, transfers the gamma-phosphate of ATP to the 4'-position of a tetraacyldisaccharide 1-phosphate intermediate (termed DS-1-P) to form tetraacyldisaccharide 1,4'-bis-phosphate (lipid IVA). This is Tetraacyldisaccharide 4'-kinase (lpxK) from Verminephrobacter eiseniae (strain EF01-2).